A 129-amino-acid polypeptide reads, in one-letter code: Thioredoxin-like 3-3 (129 aa).

Residues 1–10 (MEEGEAKKTG) are compositionally biased toward basic and acidic residues. The tract at residues 1-30 (MEEGEAKKTGLEGTGLSLPGSSHGNLRSAG) is disordered. In terms of domain architecture, Thioredoxin spans 7 to 129 (KKTGLEGTGL…RLHDRLWLHS (123 aa)). The segment covering 19 to 30 (PGSSHGNLRSAG) has biased composition (polar residues). Residues cysteine 58 and cysteine 61 each act as nucleophile in the active site. A disulfide bridge links cysteine 58 with cysteine 61.

This sequence belongs to the thioredoxin family.

Probable thiol-disulfide oxidoreductase that may participate in various redox reactions. This chain is Thioredoxin-like 3-3, found in Oryza sativa subsp. japonica (Rice).